The chain runs to 282 residues: sn-glycerol-3-phosphate transport system permease protein UgpE (282 aa).

The next 6 membrane-spanning stretches (helical) occupy residues 14–34, 86–106, 112–132, 136–156, 201–221, and 248–268; these read LMLI…FVAS, IAIA…IVFF, MAFF…RILP, VIVD…LMAS, IAAL…WPLL, and WNYV…VVVL. Positions 78-269 constitute an ABC transmembrane type-1 domain; that stretch reads LFNTFVVAIA…IPPVAVVVLM (192 aa).

The protein belongs to the binding-protein-dependent transport system permease family. In terms of assembly, the complex is composed of two ATP-binding proteins (UgpC), two transmembrane proteins (UgpA and UgpE) and a solute-binding protein (UgpB).

The protein localises to the cell inner membrane. Its function is as follows. Part of the ABC transporter complex UgpBAEC involved in sn-glycerol-3-phosphate (G3P) import. Probably responsible for the translocation of the substrate across the membrane. This chain is sn-glycerol-3-phosphate transport system permease protein UgpE (ugpE), found in Rhizobium meliloti (strain 1021) (Ensifer meliloti).